Reading from the N-terminus, the 342-residue chain is Foldase protein PrsA (342 aa).

The signal sequence occupies residues 1–22; that stretch reads MVSVKKIVASALVGVLMFSAVG. Cys-23 carries the N-palmitoyl cysteine lipid modification. A lipid anchor (S-diacylglycerol cysteine) is attached at Cys-23. The PpiC domain occupies 189-284; it reads DSGVLTKHLL…FGYHIIQAGA (96 aa).

It belongs to the PrsA family.

The protein resides in the cell membrane. The catalysed reaction is [protein]-peptidylproline (omega=180) = [protein]-peptidylproline (omega=0). Plays a major role in protein secretion by helping the post-translocational extracellular folding of several secreted proteins. The chain is Foldase protein PrsA from Clostridium perfringens (strain ATCC 13124 / DSM 756 / JCM 1290 / NCIMB 6125 / NCTC 8237 / Type A).